The primary structure comprises 1490 residues: Leucine-rich repeat-containing protein 7 (1490 aa).

LRR repeat units lie at residues 23–44, 47–68, 70–91, 93–114, 116–137, 139–161, 162–183, 185–206, 208–229, 231–253, 254–275, 277–298, 300–321, 323–344, 346–367, 369–391, and 392–413; these read IISVLDYSHCSLQQVPKEVFNF, TLEELYLDANQIEELPKQLFNC, ALRKLSIPDNDLSSLPTSIASL, NLKELDISKNGVQEFPENIKCC, CLTIIEASVNPISKLPDGFTQL, NLTQLYLNDAFLEFLPANFGRLV, KLRILELRENHLKTLPKSMHKL, QLERLDLGNNEFSELPEVLDQI, NLRELWMDNNALQVLPGSIGKL, MLVYLDMSKNRIETVDMDISGCE, ALEDLLLSSNMLQQLPDSIGLL, KLTTLKVDDNQLTMLPNTIGNL, LLEEFDCSCNELESLPPTIGYL, SLRTLAVDENFLPELPREIGSC, NVTVMSLRSNKLEFLPEEIGQM, RLRVLNLSDNRLKNLPFSFTKLK, and ELAALWLSDNQSKALIPLQTEA. Ser-439, Ser-441, and Ser-443 each carry phosphoserine. Positions 663–676 are enriched in basic and acidic residues; it reads KKESTDESEVDKTH. Disordered stretches follow at residues 663-709, 775-808, and 822-899; these read KKES…VGSL, DNTGFVSEEATGENANNNPLLSSKARSVPAHGRR, and ELEQ…YHDP. Residues 677-686 are compositionally biased toward polar residues; it reads CLNNSVSSGT. Low complexity predominate over residues 687-700; the sequence is YSDYSPSQASSASS. Over residues 787-799 the composition is skewed to polar residues; the sequence is ENANNNPLLSSKA. At Thr-831 the chain carries Phosphothreonine. Ser-850 bears the Phosphoserine mark. Residues 859–871 are compositionally biased toward low complexity; the sequence is PSKLETTPTTSPL. The residue at position 865 (Thr-865) is a Phosphothreonine. A Phosphoserine modification is found at Ser-869. A compositionally biased stretch (basic and acidic residues) spans 872-882; the sequence is PERKDHMKEPT. Ser-947, Ser-949, and Ser-1118 each carry phosphoserine. An Omega-N-methylarginine modification is found at Arg-1149. Residues 1194-1217 are compositionally biased toward polar residues; the sequence is LTQRRPLSARSYSTESYGASQTRP. Positions 1194–1218 are disordered; it reads LTQRRPLSARSYSTESYGASQTRPV. Phosphoserine is present on Ser-1233. Disordered regions lie at residues 1238–1265 and 1282–1312; these read GNYGDKTSDNSDIKTRPTPVKGEESCGK and RLDRTPSQQSNILDNGQEDVSPSGQWNPYPL. A compositionally biased stretch (basic and acidic residues) spans 1243 to 1263; that stretch reads KTSDNSDIKTRPTPVKGEESC. Over residues 1286-1307 the composition is skewed to polar residues; sequence TPSQQSNILDNGQEDVSPSGQW. A phosphoserine mark is found at Ser-1288 and Ser-1392. The PDZ domain maps to 1398–1488; the sequence is EQFCVRIEKN…TVDLVIQREL (91 aa).

It belongs to the LAP (LRR and PDZ) protein family. Interacts with CNKSR2 and DLG4. Interacts with CTNND2/Catenin delta-2. Forms a complex with N-cadherin through CTNND2. Interacts with CAMK2A. O-glycosylated and phosphorylated. In terms of tissue distribution, brain-specific. Highly concentrated at synapses.

The protein resides in the cytoplasm. The protein localises to the postsynaptic density. Required for normal synaptic spine architecture and function. Necessary for DISC1 and GRM5 localization to postsynaptic density complexes and for both N-methyl D-aspartate receptor-dependent and metabotropic glutamate receptor-dependent long term depression. This chain is Leucine-rich repeat-containing protein 7 (Lrrc7), found in Rattus norvegicus (Rat).